The sequence spans 194 residues: Probable GTP-binding protein EngB (194 aa).

Residues 19-193 form the EngB-type G domain; the sequence is DCIQICFWGR…VLFIEENIFK (175 aa). Residues 27–34, 53–57, 70–73, 137–140, and 172–174 contribute to the GTP site; these read GRSNVGKS, GRTQF, DLPG, TKID, and VSS. Mg(2+) is bound by residues S34 and T55.

The protein belongs to the TRAFAC class TrmE-Era-EngA-EngB-Septin-like GTPase superfamily. EngB GTPase family. Mg(2+) serves as cofactor.

Its function is as follows. Necessary for normal cell division and for the maintenance of normal septation. The sequence is that of Probable GTP-binding protein EngB from Mycoplasmopsis agalactiae (strain NCTC 10123 / CIP 59.7 / PG2) (Mycoplasma agalactiae).